The following is a 260-amino-acid chain: Magnesium dechelatase SGRL, chloroplastic (260 aa).

Residues 1–45 (MACYIVPYYHHPVLSHPNREIFSHRHHHHHRFCNNLLNRRISVPR) constitute a chloroplast transit peptide.

The protein belongs to the staygreen family. Interacts with the light harvesting complex II (LHCII). Interacts with the chlorophyll catabolic enzymes (CCEs) NYC1, NOL, PAO and RCCR. As to expression, expressed in cotyledons, pollen and young leaves.

It localises to the plastid. The protein localises to the chloroplast thylakoid. The catalysed reaction is chlorophyllide a + 2 H(+) = pheophorbide a + Mg(2+). Magnesium chelatase involved in chlorophyll a degradation in the chlorophyll-protein complexes of photosystem I (PSI) and photosystem II (PSII). Contributes to the degradation of PSI and PSII in the thylakoid membranes. Recombinant SGRL possesses high dechelating activity against chlorophyllide a, very low activity against chlorophyll a, and no activity against chlorophyll b. Contributes to abiotic stress-induced chlorophyll degradation and leaf yellowing during vegetative plant growth. The protein is Magnesium dechelatase SGRL, chloroplastic of Arabidopsis thaliana (Mouse-ear cress).